The chain runs to 195 residues: Probable GTP-binding protein EngB (195 aa).

The EngB-type G domain occupies 22–194; the sequence is LKGEVAFVGR…LDLISTLLKE (173 aa). Residues 30–37, 56–60, 74–77, 141–144, and 173–175 contribute to the GTP site; these read GRSNVGKS, GKTRS, DLPG, TKMD, and TSS. Positions 37 and 58 each coordinate Mg(2+).

Belongs to the TRAFAC class TrmE-Era-EngA-EngB-Septin-like GTPase superfamily. EngB GTPase family. Mg(2+) serves as cofactor.

Its function is as follows. Necessary for normal cell division and for the maintenance of normal septation. The sequence is that of Probable GTP-binding protein EngB from Thermotoga maritima (strain ATCC 43589 / DSM 3109 / JCM 10099 / NBRC 100826 / MSB8).